The following is a 494-amino-acid chain: Alpha-amylase 2 (494 aa).

An N-terminal signal peptide occupies residues methionine 1–alanine 18. Residues cysteine 46 and cysteine 102 are joined by a disulfide bond. Residues asparagine 116, arginine 165, and aspartate 174 each coordinate Ca(2+). A disulfide bond links cysteine 153 and cysteine 167. Position 202 (arginine 202) interacts with chloride. Catalysis depends on aspartate 204, which acts as the Nucleophile. A Ca(2+)-binding site is contributed by histidine 208. Glutamate 241 functions as the Proton donor in the catalytic mechanism. Positions 304 and 343 each coordinate chloride. Residues phenylalanine 350 to phenylalanine 370 form a disordered region. Over residues threonine 351 to glutamine 363 the composition is skewed to low complexity. Intrachain disulfides connect cysteine 376-cysteine 382 and cysteine 448-cysteine 460.

It belongs to the glycosyl hydrolase 13 family. In terms of assembly, monomer. Ca(2+) serves as cofactor. Requires chloride as cofactor.

It carries out the reaction Endohydrolysis of (1-&gt;4)-alpha-D-glucosidic linkages in polysaccharides containing three or more (1-&gt;4)-alpha-linked D-glucose units.. This Drosophila ananassae (Fruit fly) protein is Alpha-amylase 2 (Amy58).